Here is an 873-residue protein sequence, read N- to C-terminus: Tyrosine-protein kinase receptor TYRO3 (873 aa).

The first 28 residues, 1–28 (MELRRSMALPRLLLLGLWAAALRDGAVA), serve as a signal peptide directing secretion. Ig-like C2-type domains follow at residues 29–116 (AGMK…KEES) and 127–208 (PYFT…ATVQ). Over 29–416 (AGMKFTGSPI…QRQPPYGTSW (388 aa)) the chain is Extracellular. An N-linked (GlcNAc...) asparagine glycan is attached at asparagine 51. 2 disulfides stabilise this stretch: cysteine 52–cysteine 105 and cysteine 148–cysteine 191. Asparagine 179, asparagine 184, asparagine 218, asparagine 228, asparagine 281, asparagine 353, and asparagine 367 each carry an N-linked (GlcNAc...) asparagine glycan. 2 Fibronectin type-III domains span residues 215 to 308 (PPLN…TLEL) and 310 to 403 (PSST…AQEV). Residues 417–437 (VPVALGILTALVTAVALALIL) form a helical membrane-spanning segment. The Cytoplasmic segment spans residues 438-873 (LRKRRKETRF…ELETEGEKSC (436 aa)). The Protein kinase domain maps to 505-776 (FTLGRMLGKG…GVLRSQLEMI (272 aa)). Residues 511 to 519 (LGKGEFGSV) and lysine 537 contribute to the ATP site. The Proton acceptor role is filled by aspartate 642. The residue at position 673 (tyrosine 673) is a Phosphotyrosine; by autocatalysis. Residues 845-873 (VEGERHPEGQEGENKSLLYELETEGEKSC) form a disordered region. The span at 847–858 (GERHPEGQEGEN) shows a compositional bias: basic and acidic residues.

The protein belongs to the protein kinase superfamily. Tyr protein kinase family. AXL/UFO subfamily. Post-translationally, autophosphorylated on tyrosine residues. As to expression, detected in embryonic retina (at protein level). detected in brain, retina, kidney and in retinal Mueller glia-like cells.

It localises to the cell membrane. It carries out the reaction L-tyrosyl-[protein] + ATP = O-phospho-L-tyrosyl-[protein] + ADP + H(+). In terms of biological role, receptor tyrosine kinase that transduces signals from the extracellular matrix into the cytoplasm by binding to several ligands. Regulates many physiological processes including cell survival, migration and differentiation. Ligand binding at the cell surface induces dimerization and autophosphorylation of TYRO3 on its intracellular domain that provides docking sites for downstream signaling molecules. Following activation by ligand, enhances PI3-kinase activity and activates the AKT survival pathway, including nuclear translocation of NF-kappa-B and up-regulation of transcription of NF-kappa-B-regulated genes. The polypeptide is Tyrosine-protein kinase receptor TYRO3 (TYRO3) (Gallus gallus (Chicken)).